The chain runs to 505 residues: Lysine--tRNA ligase (505 aa).

Residues E415 and E422 each coordinate Mg(2+).

Belongs to the class-II aminoacyl-tRNA synthetase family. As to quaternary structure, homodimer. The cofactor is Mg(2+).

The protein localises to the cytoplasm. The catalysed reaction is tRNA(Lys) + L-lysine + ATP = L-lysyl-tRNA(Lys) + AMP + diphosphate. The protein is Lysine--tRNA ligase of Escherichia coli O157:H7.